We begin with the raw amino-acid sequence, 165 residues long: Nucleotide-binding protein RoseRS_0530 (165 aa).

It belongs to the YajQ family.

In terms of biological role, nucleotide-binding protein. The protein is Nucleotide-binding protein RoseRS_0530 of Roseiflexus sp. (strain RS-1).